A 294-amino-acid polypeptide reads, in one-letter code: Extracellular metalloprotease TRV_07111 (294 aa).

The signal sequence occupies residues 1 to 19; it reads MRFSVVFAAIAALSSVVTA. 3 N-linked (GlcNAc...) asparagine glycosylation sites follow: asparagine 49, asparagine 54, and asparagine 74. Histidine 185 serves as a coordination point for Zn(2+). Residue glutamate 186 is part of the active site. Residue histidine 189 participates in Zn(2+) binding. Cysteine 224 and cysteine 250 are disulfide-bonded.

The protein belongs to the peptidase M43B family.

It is found in the secreted. Secreted metalloproteinase that allows assimilation of proteinaceous substrates. Plays a pivotal role as a pathogenicity determinant during infections and contributes to the ability of the pathogen to persist within the mammalian host. The protein is Extracellular metalloprotease TRV_07111 of Trichophyton verrucosum (strain HKI 0517).